The primary structure comprises 125 residues: Histone H2A, orphon (125 aa).

Positions 1–18 are enriched in basic residues; it reads MSGRGKGGKVKAKAKSRS. Residues 1-21 are disordered; sequence MSGRGKGGKVKAKAKSRSSRA. S2 bears the N-acetylserine mark. S2 carries the phosphoserine modification. A Glycyl lysine isopeptide (Lys-Gly) (interchain with G-Cter in ubiquitin) cross-link involves residue K119.

The protein belongs to the histone H2A family. As to quaternary structure, the nucleosome is a histone octamer containing two molecules each of H2A, H2B, H3 and H4 assembled in one H3-H4 heterotetramer and two H2A-H2B heterodimers. The octamer wraps approximately 147 bp of DNA. Post-translationally, monoubiquitination of Lys-119 gives a specific tag for epigenetic transcriptional repression. In terms of processing, phosphorylation on Ser-2 is enhanced during mitosis. Phosphorylation on Ser-2 directly represses transcription.

It is found in the nucleus. Its subcellular location is the chromosome. Its function is as follows. Core component of nucleosome. Nucleosomes wrap and compact DNA into chromatin, limiting DNA accessibility to the cellular machineries which require DNA as a template. Histones thereby play a central role in transcription regulation, DNA repair, DNA replication and chromosomal stability. DNA accessibility is regulated via a complex set of post-translational modifications of histones, also called histone code, and nucleosome remodeling. In Chironomus thummi thummi (Midge), this protein is Histone H2A, orphon.